A 539-amino-acid chain; its full sequence is Probable K(+)/H(+) antiporter subunit D (539 aa).

A run of 14 helical transmembrane segments spans residues 4–23 (WLDH…AAVL), 36–58 (AIGF…LAAA), 78–100 (FGIV…GLAL), 113–135 (AGHH…FLTG), 140–162 (LFVF…SGPL), 175–197 (LAAS…TLNM), 217–239 (MGSA…SFWL), 251–273 (AGVF…LLVF), 283–305 (FGQE…GVLA), 312–331 (LAGY…VGLG), 335–357 (MLAG…FLLI), 400–422 (VLGL…SGFI), 442–464 (AMSA…AMIA), and 484–506 (VVVI…SLQA).

It belongs to the CPA3 antiporters (TC 2.A.63) subunit D family. As to quaternary structure, may form a hetero-oligomeric complex that consists of six subunits: PhaAB, PhaC, PhaD, PhaE, PhaF and PhaG.

It is found in the cell membrane. Functionally, part of a K(+) efflux system which is required for the adaptation of R.meliloti to alkaline pH as well as for the infection process during symbiotic nodule development. This is Probable K(+)/H(+) antiporter subunit D (phaD) from Rhizobium meliloti (strain 1021) (Ensifer meliloti).